The sequence spans 505 residues: Sucrose porin (505 aa).

A signal peptide spans 1-22 (MYKKRKLAILIALLTGTAAAHG). Positions 44-94 (ETRASTAESRAASAEQKVQQLTQQQQQTQATTQQVARRTTQLEEKAERPGG) are disordered. The segment covering 46-82 (RASTAESRAASAEQKVQQLTQQQQQTQATTQQVARRT) has biased composition (low complexity). Residues 83-93 (TQLEEKAERPG) are compositionally biased toward basic and acidic residues.

This sequence belongs to the porin LamB (TC 1.B.3) family. In terms of assembly, homotrimer.

It localises to the cell outer membrane. Functionally, porin for sucrose uptake. The sequence is that of Sucrose porin (scrY) from Klebsiella pneumoniae.